A 146-amino-acid chain; its full sequence is Hemoglobin subunit beta (146 aa).

The residue at position 1 (V1) is an N-acetylvaline. The region spanning 2-146 (HLTAEEKSAV…VANALAHKYH (145 aa)) is the Globin domain. T12 carries the phosphothreonine modification. S44 carries the post-translational modification Phosphoserine. N6-acetyllysine is present on K59. H63 provides a ligand contact to heme b. K82 bears the N6-acetyllysine mark. H92 provides a ligand contact to heme b. Residue C93 is modified to S-nitrosocysteine. Residue K144 is modified to N6-acetyllysine.

It belongs to the globin family. Heterotetramer of two alpha chains and two beta chains. In terms of tissue distribution, red blood cells.

Functionally, involved in oxygen transport from the lung to the various peripheral tissues. This chain is Hemoglobin subunit beta (HBB), found in Meles meles (Eurasian badger).